The primary structure comprises 101 residues: Protein Tat (101 aa).

An interaction with human CREBBP region spans residues 1-24 (MEPVDPNREPWNHPGSQPKTACTN). The interval 1–48 (MEPVDPNREPWNHPGSQPKTACTNCYCKKCCYHCQVCFLQKGLGISYG) is transactivation. Residues C22, C25, and C27 each coordinate Zn(2+). A cysteine-rich region spans residues 22 to 37 (CTNCYCKKCCYHCQVC). N6-acetyllysine; by host PCAF is present on K28. C30, H33, C34, and C37 together coordinate Zn(2+). The segment at 38-48 (FLQKGLGISYG) is core. The tract at residues 48-101 (GRKKRRQRRSAPPGSKNHQDLIPEQPLFQTQRKPTGPEESKKEVESKAEPDRFD) is disordered. The Nuclear localization signal, RNA-binding (TAR), and protein transduction signature appears at 49-57 (RKKRRQRRS). The interaction with the host capping enzyme RNGTT stretch occupies residues 49–86 (RKKRRQRRSAPPGSKNHQDLIPEQPLFQTQRKPTGPEE). Residues K50 and K51 each carry the N6-acetyllysine; by host EP300 and GCN5L2 modification. Asymmetric dimethylarginine; by host PRMT6 is present on residues R52 and R53. The segment covering 82–101 (TGPEESKKEVESKAEPDRFD) has biased composition (basic and acidic residues).

Belongs to the lentiviruses Tat family. In terms of assembly, interacts with host CCNT1. Associates with the P-TEFb complex composed at least of Tat, P-TEFb (CDK9 and CCNT1), TAR RNA, RNA Pol II. Recruits the HATs CREBBP, TAF1/TFIID, EP300, PCAF and GCN5L2. Interacts with host KAT5/Tip60; this interaction targets the latter to degradation. Interacts with the host deacetylase SIRT1. Interacts with host capping enzyme RNGTT; this interaction stimulates RNGTT. Binds to host KDR, and to the host integrins ITGAV/ITGB3 and ITGA5/ITGB1. Interacts with host KPNB1/importin beta-1 without previous binding to KPNA1/importin alpha-1. Interacts with EIF2AK2. Interacts with host nucleosome assembly protein NAP1L1; this interaction may be required for the transport of Tat within the nucleus, since the two proteins interact at the nuclear rim. Interacts with host C1QBP/SF2P32; this interaction involves lysine-acetylated Tat. Interacts with the host chemokine receptors CCR2, CCR3 and CXCR4. Interacts with host DPP4/CD26; this interaction may trigger an anti-proliferative effect. Interacts with host LDLR. Interacts with the host extracellular matrix metalloproteinase MMP1. Interacts with host PRMT6; this interaction mediates Tat's methylation. Interacts with, and is ubiquitinated by MDM2/Hdm2. Interacts with host PSMC3 and HTATIP2. Interacts with STAB1; this interaction may overcome SATB1-mediated repression of IL2 and IL2RA (interleukin) in T cells by binding to the same domain than HDAC1. Interacts (when acetylated) with human CDK13, thereby increasing HIV-1 mRNA splicing and promoting the production of the doubly spliced HIV-1 protein Nef. Interacts with host TBP; this interaction modulates the activity of transcriptional pre-initiation complex. Interacts with host RELA. Interacts with host PLSCR1; this interaction negatively regulates Tat transactivation activity by altering its subcellular distribution. Post-translationally, asymmetrical arginine methylation by host PRMT6 seems to diminish the transactivation capacity of Tat and affects the interaction with host CCNT1. In terms of processing, acetylation by EP300, CREBBP, GCN5L2/GCN5 and PCAF regulates the transactivation activity of Tat. EP300-mediated acetylation of Lys-50 promotes dissociation of Tat from the TAR RNA through the competitive binding to PCAF's bromodomain. In addition, the non-acetylated Tat's N-terminus can also interact with PCAF. PCAF-mediated acetylation of Lys-28 enhances Tat's binding to CCNT1. Lys-50 is deacetylated by SIRT1. Polyubiquitination by host MDM2 does not target Tat to degradation, but activates its transactivation function and fosters interaction with CCNT1 and TAR RNA. Post-translationally, phosphorylated by EIF2AK2 on serine and threonine residues adjacent to the basic region important for TAR RNA binding and function. Phosphorylation of Tat by EIF2AK2 is dependent on the prior activation of EIF2AK2 by dsRNA.

It is found in the host nucleus. The protein localises to the host nucleolus. Its subcellular location is the host cytoplasm. It localises to the secreted. In terms of biological role, transcriptional activator that increases RNA Pol II processivity, thereby increasing the level of full-length viral transcripts. Recognizes a hairpin structure at the 5'-LTR of the nascent viral mRNAs referred to as the transactivation responsive RNA element (TAR) and recruits the cyclin T1-CDK9 complex (P-TEFb complex) that will in turn hyperphosphorylate the RNA polymerase II to allow efficient elongation. The CDK9 component of P-TEFb and other Tat-activated kinases hyperphosphorylate the C-terminus of RNA Pol II that becomes stabilized and much more processive. Other factors such as HTATSF1/Tat-SF1, SUPT5H/SPT5, and HTATIP2 are also important for Tat's function. Besides its effect on RNA Pol II processivity, Tat induces chromatin remodeling of proviral genes by recruiting the histone acetyltransferases (HATs) CREBBP, EP300 and PCAF to the chromatin. This also contributes to the increase in proviral transcription rate, especially when the provirus integrates in transcriptionally silent region of the host genome. To ensure maximal activation of the LTR, Tat mediates nuclear translocation of NF-kappa-B by interacting with host RELA. Through its interaction with host TBP, Tat may also modulate transcription initiation. Tat can reactivate a latently infected cell by penetrating in it and transactivating its LTR promoter. In the cytoplasm, Tat is thought to act as a translational activator of HIV-1 mRNAs. Its function is as follows. Extracellular circulating Tat can be endocytosed by surrounding uninfected cells via the binding to several surface receptors such as CD26, CXCR4, heparan sulfate proteoglycans (HSPG) or LDLR. Neurons are rarely infected, but they internalize Tat via their LDLR. Through its interaction with nuclear HATs, Tat is potentially able to control the acetylation-dependent cellular gene expression. Modulates the expression of many cellular genes involved in cell survival, proliferation or in coding for cytokines or cytokine receptors. Tat plays a role in T-cell and neurons apoptosis. Tat induced neurotoxicity and apoptosis probably contribute to neuroAIDS. Circulating Tat also acts as a chemokine-like and/or growth factor-like molecule that binds to specific receptors on the surface of the cells, affecting many cellular pathways. In the vascular system, Tat binds to ITGAV/ITGB3 and ITGA5/ITGB1 integrins dimers at the surface of endothelial cells and competes with bFGF for heparin-binding sites, leading to an excess of soluble bFGF. The polypeptide is Protein Tat (Human immunodeficiency virus type 1 group M subtype J (isolate SE9173) (HIV-1)).